We begin with the raw amino-acid sequence, 516 residues long: GMP synthase [glutamine-hydrolyzing] (516 aa).

Residues 8–198 (KILILDFGSQ…VVNICGCDTL (191 aa)) form the Glutamine amidotransferase type-1 domain. Catalysis depends on Cys84, which acts as the Nucleophile. Catalysis depends on residues His172 and Glu174. A GMPS ATP-PPase domain is found at 199–391 (WNIENIIEND…LGLPYNMLYR (193 aa)). ATP is bound at residue 226-232 (SGGVDSS).

As to quaternary structure, homodimer.

The enzyme catalyses XMP + L-glutamine + ATP + H2O = GMP + L-glutamate + AMP + diphosphate + 2 H(+). It participates in purine metabolism; GMP biosynthesis; GMP from XMP (L-Gln route): step 1/1. Functionally, catalyzes the synthesis of GMP from XMP. This chain is GMP synthase [glutamine-hydrolyzing], found in Francisella tularensis subsp. tularensis (strain WY96-3418).